The following is a 402-amino-acid chain: Peptidyl-prolyl cis-trans isomerase FKBP8 (402 aa).

Over residues 28–39 (DGVDDAEEEDDL) the composition is skewed to acidic residues. The segment at 28–54 (DGVDDAEEEDDLSGLPPLEDMGQPTVE) is disordered. The region spanning 110–194 (GQVVTVHLQM…CLEVTLKTAE (85 aa)) is the PPIase FKBP-type domain. One copy of the TPR 1 repeat lies at 211–244 (ANRKRECGNAHYQRADFVLAANSYDLAIKAITSN). Residues Lys239, Lys261, Lys263, and Lys274 each participate in a glycyl lysine isopeptide (Lys-Gly) (interchain with G-Cter in ubiquitin) cross-link. TPR repeat units lie at residues 262-295 (VKCL…QPDN) and 296-329 (IKAL…EPSN). Position 286 is a phosphoserine (Ser286). Residues Lys297, Lys304, Lys324, Lys330, Lys338, Lys341, and Lys342 each participate in a glycyl lysine isopeptide (Lys-Gly) (interchain with G-Cter in ubiquitin) cross-link. The chain crosses the membrane as a helical span at residues 380–400 (WLFGATAVALGGVALSVVIAA).

In terms of assembly, homomultimers or heteromultimers (Potential). Forms heterodimer with calmodulin. When activated by calmodulin and calcium, interacts with the BH4 domain of BCL2 and weakly with BCLX isoform Bcl-X(L). Does not bind and inhibit calcineurin. Interacts with ZFYVE27; may negatively regulate ZFYVE27 phosphorylation. The cofactor is Ca(2+). Post-translationally, ubiquitinated by PRKN during mitophagy, leading to its degradation and enhancement of mitophagy. Deubiquitinated by USP30. In terms of tissue distribution, detected throughout the embryonic body, in caudal neural tube, limbs and head. Detected in adult retina, brain, heart, kidney, liver, pancreas, lung, testis and urinary bladder (at protein level). Detected in adult brain, kidney, liver, testis and trigeminal nerve, and in embryo. Detected at lower levels in lung, spleen, heart and ovary. Widely expressed in forebrain. Detected in the Purkinje cell layer in the cerebellum and in hippocampus neurons.

The protein resides in the mitochondrion membrane. It carries out the reaction [protein]-peptidylproline (omega=180) = [protein]-peptidylproline (omega=0). Its function is as follows. Constitutively inactive PPiase, which becomes active when bound to calmodulin and calcium. Seems to act as a chaperone for BCL2, targets it to the mitochondria and modulates its phosphorylation state. The BCL2/FKBP8/calmodulin/calcium complex probably interferes with the binding of BCL2 to its targets. The active form of FKBP8 may therefore play a role in the regulation of apoptosis. Required for normal embryonic development. In Mus musculus (Mouse), this protein is Peptidyl-prolyl cis-trans isomerase FKBP8 (Fkbp8).